The following is a 316-amino-acid chain: Mycothiol acetyltransferase (316 aa).

N-acetyltransferase domains follow at residues 16 to 153 (REVR…VPAV) and 156 to 316 (VRIR…PAAN). Residue glutamate 36 participates in 1D-myo-inositol 2-(L-cysteinylamino)-2-deoxy-alpha-D-glucopyranoside binding. Acetyl-CoA-binding positions include 83 to 85 (LVV) and 91 to 96 (RRGIGS). 1D-myo-inositol 2-(L-cysteinylamino)-2-deoxy-alpha-D-glucopyranoside is bound by residues glutamate 183, lysine 228, and glutamate 238. Acetyl-CoA-binding positions include 242 to 244 (VGV) and 249 to 255 (QGRGLGQ). 1D-myo-inositol 2-(L-cysteinylamino)-2-deoxy-alpha-D-glucopyranoside is bound at residue tyrosine 283. An acetyl-CoA-binding site is contributed by 288–293 (NVAAVR).

It belongs to the acetyltransferase family. MshD subfamily. Monomer.

It carries out the reaction 1D-myo-inositol 2-(L-cysteinylamino)-2-deoxy-alpha-D-glucopyranoside + acetyl-CoA = mycothiol + CoA + H(+). Its function is as follows. Catalyzes the transfer of acetyl from acetyl-CoA to desacetylmycothiol (Cys-GlcN-Ins) to form mycothiol. In Mycolicibacterium paratuberculosis (strain ATCC BAA-968 / K-10) (Mycobacterium paratuberculosis), this protein is Mycothiol acetyltransferase.